The primary structure comprises 400 residues: Polyadenylate-binding protein-interacting protein 1 (400 aa).

Positions Met-1 to Glu-10 are enriched in basic and acidic residues. Residues Met-1 to Lys-36 are disordered. The segment covering Thr-12–Ser-32 has biased composition (polar residues). The tract at residues Pro-37–Asn-64 is PABPC1-interacting motif-2 (PAM2). The PAIP1 middle domain (PAIP1M) stretch occupies residues Thr-78–Ser-296. The MIF4G domain occupies Ser-80–Asn-297. The segment at Asp-356–Asp-376 is disordered. The PABPC1-interacting motif-1 (PAM1) stretch occupies residues Gly-361–Gln-400.

In terms of assembly, interacts with the RRM1-RRM2 and C-terminus regions of PABPC1 in a 1:1 stoichiometry. Interacts with EIF4A.

Its subcellular location is the cytoplasm. Acts as a coactivator in the regulation of translation initiation of poly(A)-containing mRNAs. Its stimulatory activity on translation is mediated via its action on PABPC1. Competes with PAIP2 for binding to PABPC1. Its association with EIF4A and PABPC1 may potentiate contacts between mRNA termini. May also be involved in translationally coupled mRNA turnover. Implicated with other RNA-binding proteins in the cytoplasmic deadenylation/translational and decay interplay of the FOS mRNA mediated by the major coding-region determinant of instability (mCRD) domain. This is Polyadenylate-binding protein-interacting protein 1 (Paip1) from Mus musculus (Mouse).